The sequence spans 459 residues: Putative BTB/POZ domain-containing protein R541 (459 aa).

The BTB domain maps to 76-143 (NHITINVGGK…NQKSTNIELY (68 aa)).

Belongs to the mimivirus BTB/WD family.

The polypeptide is Putative BTB/POZ domain-containing protein R541 (Acanthamoeba polyphaga mimivirus (APMV)).